The primary structure comprises 309 residues: tRNA pseudouridine synthase B (309 aa).

The active-site Nucleophile is Asp52.

It belongs to the pseudouridine synthase TruB family. Type 1 subfamily.

The enzyme catalyses uridine(55) in tRNA = pseudouridine(55) in tRNA. Functionally, responsible for synthesis of pseudouridine from uracil-55 in the psi GC loop of transfer RNAs. The protein is tRNA pseudouridine synthase B of Leptospira interrogans serogroup Icterohaemorrhagiae serovar copenhageni (strain Fiocruz L1-130).